The primary structure comprises 385 residues: FK506-binding protein 5 (385 aa).

Positions 26–115 (TNFVSVHYDA…RFEVELIGFW (90 aa)) constitute a PPIase FKBP-type domain. TPR repeat units lie at residues 128 to 161 (AEKK…IQDL), 177 to 210 (VSIQ…DMTK), and 211 to 244 (IKAY…AIGL).

The enzyme catalyses [protein]-peptidylproline (omega=180) = [protein]-peptidylproline (omega=0). With respect to regulation, inhibited by both FK506 and rapamycin. PPIases accelerate the folding of proteins. It catalyzes the cis-trans isomerization of proline imidic peptide bonds in oligopeptides. This chain is FK506-binding protein 5 (FKBP5), found in Rhizopus delemar (strain RA 99-880 / ATCC MYA-4621 / FGSC 9543 / NRRL 43880) (Mucormycosis agent).